The sequence spans 162 residues: uncharacterized protein (162 aa).

This is an uncharacterized protein from Schizosaccharomyces pombe (strain 972 / ATCC 24843) (Fission yeast).